The primary structure comprises 1354 residues: MSTGDSFETRFEKMDNLLRDPKSEVNSDCLLDGLDALVYDLDFPALRKNKNIDNFLSRYKDTINKIRDLRMKAEDYEVVKVIGRGAFGEVQLVRHKSTRKVYAMKLLSKFEMIKRSDSAFFWEERDIMAFANSPWVVQLFYAFQDDRYLYMVMEYMPGGDLVNLMSNYDVPEKWARFYTAEVVLALDAIHSMGFIHRDVKPDNMLLDKSGHLKLADFGTCMKMNKEGMVRCDTAVGTPDYISPEVLKSQGGDGYYGRECDWWSVGVFLYEMLVGDTPFYADSLVGTYSKIMNHKNSLTFPDDNDISKEAKNLICAFLTDREVRLGRNGVEEIKRHLFFKNDQWAWETLRDTVAPVVPDLSSDIDTSNFDDLEEDKGEEETFPIPKAFVGNQLPFVGFTYYSNRRYLSSANPNDNRTSSNADKSLQESLQKTIYKLEEQLHNEMQLKDEMEQKCRTSNIKLDKIMKELDEEGNQRRNLESTVSQIEKEKMLLQHRINEYQRKAEQENEKRRNVENEVSTLKDQLEDLKKVSQNSQLANEKLSQLQKQLEEANDLLRTESDTAVRLRKSHTEMSKSISQLESLNRELQERNRILENSKSQTDKDYYQLQAILEAERRDRGHDSEMIGDLQARITSLQEEVKHLKHNLEKVEGERKEAQDMLNHSEKEKNNLEIDLNYKLKSLQQRLEQEVNEHKVTKARLTDKHQSIEEAKSVAMCEMEKKLKEEREAREKAENRVVQIEKQCSMLDVDLKQSQQKLEHLTGNKERMEDEVKNLTLQLEQESNKRLLLQNELKTQAFEADNLKGLEKQMKQEINTLLEAKRLLEFELAQLTKQYRGNEGQMRELQDQLEAEQYFSTLYKTQVKELKEEIEEKNRENLKKIQELQNEKETLATQLDLAETKAESEQLARGLLEEQYFELTQESKKAASRNRQEITDKDHTVSRLEEANSMLTKDIEILRRENEELTEKMKKAEEEYKLEKEEEISNLKAAFEKNINTERTLKTQAVNKLAEIMNRKDFKIDRKKANTQDLRKKEKENRKLQLELNQEREKFNQMVVKHQKELNDMQAQLVEECAHRNELQMQLASKESDIEQLRAKLLDLSDSTSVASFPSADETDGNLPESRIEGWLSVPNRGNIKRYGWKKQYVVVSSKKILFYNDEQDKEQSNPSMVLDIDKLFHVRPVTQGDVYRAETEEIPKIFQILYANEGECRKDVEMEPVQQAEKTNFQNHKGHEFIPTLYHFPANCDACAKPLWHVFKPPPALECRRCHVKCHRDHLDKKEDLICPCKVSYDVTSARDMLLLACSQDEQKKWVTHLVKKIPKNPPSGFVRASPRTLSTRSTANQSFRKVVKNTSGKTS.

Position 2 is an N-acetylserine (serine 2). The region spanning 76–338 (YEVVKVIGRG…VEEIKRHLFF (263 aa)) is the Protein kinase domain. Residues 82-90 (IGRGAFGEV) and lysine 105 contribute to the ATP site. Catalysis depends on aspartate 198, which acts as the Proton acceptor. The AGC-kinase C-terminal domain occupies 341–409 (DQWAWETLRD…YSNRRYLSSA (69 aa)). Positions 368-727 (FDDLEEDKGE…KKLKEEREAR (360 aa)) are interaction with FHOD1. The stretch at 422-692 (KSLQESLQKT…RLEQEVNEHK (271 aa)) forms a coiled coil. The REM-1 domain maps to 479-556 (STVSQIEKEK…LEEANDLLRT (78 aa)). The residue at position 647 (lysine 647) is an N6-acetyllysine. The SHROOM3 binding stretch occupies residues 707–946 (EAKSVAMCEM…TVSRLEEANS (240 aa)). Positions 949-1015 (TKDIEILRRE…LAEIMNRKDF (67 aa)) constitute a RhoBD domain. The segment at 998–1010 (LKTQAVNKLAEIM) is RHOA binding. Positions 1011–1102 (NRKDFKIDRK…KLLDLSDSTS (92 aa)) form a coiled coil. A phosphoserine mark is found at serine 1105 and serine 1108. Positions 1115–1354 (NLPESRIEGW…VVKNTSGKTS (240 aa)) are auto-inhibitory. A PH domain is found at 1118–1317 (ESRIEGWLSV…WVTHLVKKIP (200 aa)). The segment at 1228–1281 (GHEFIPTLYHFPANCDACAKPLWHVFKPPPALECRRCHVKCHRDHLDKKEDLIC) adopts a Phorbol-ester/DAG-type zinc-finger fold. Residues 1320–1354 (PPSGFVRASPRTLSTRSTANQSFRKVVKNTSGKTS) are disordered. Serine 1328 is modified (phosphoserine). Polar residues predominate over residues 1330–1354 (RTLSTRSTANQSFRKVVKNTSGKTS).

The protein belongs to the protein kinase superfamily. AGC Ser/Thr protein kinase family. Homodimer. Interacts with RHOB, RHOC, MYLC2B and PTEN. Interacts with ITGB1BP1 (via N-terminus and PTB domain). Interacts with RHOA (activated by GTP), CHORDC1, DAPK3, GEM, JIP3, RHOE, PPP1R12A, PFN1, LIMK1, LIMK2 and TSG101. Interacts with FHOD1 in a Src-dependent manner. Interacts with SHROOM3. It depends on Mg(2+) as a cofactor. In terms of processing, autophosphorylated on serine and threonine residues. Cleaved by caspase-3 during apoptosis. This leads to constitutive activation of the kinase and membrane blebbing. Detected in blood platelets.

It is found in the cytoplasm. Its subcellular location is the cytoskeleton. The protein localises to the microtubule organizing center. It localises to the centrosome. The protein resides in the centriole. It is found in the golgi apparatus membrane. Its subcellular location is the cell projection. The protein localises to the bleb. It localises to the cell membrane. The protein resides in the lamellipodium. It is found in the ruffle. The catalysed reaction is L-seryl-[protein] + ATP = O-phospho-L-seryl-[protein] + ADP + H(+). The enzyme catalyses L-threonyl-[protein] + ATP = O-phospho-L-threonyl-[protein] + ADP + H(+). Activated by RHOA binding. Inhibited by Y-27632. Functionally, protein kinase which is a key regulator of the actin cytoskeleton and cell polarity. Involved in regulation of smooth muscle contraction, actin cytoskeleton organization, stress fiber and focal adhesion formation, neurite retraction, cell adhesion and motility via phosphorylation of DAPK3, GFAP, LIMK1, LIMK2, MYL9/MLC2, TPPP, PFN1 and PPP1R12A. Phosphorylates FHOD1 and acts synergistically with it to promote SRC-dependent non-apoptotic plasma membrane blebbing. Phosphorylates JIP3 and regulates the recruitment of JNK to JIP3 upon UVB-induced stress. Acts as a suppressor of inflammatory cell migration by regulating PTEN phosphorylation and stability. Acts as a negative regulator of VEGF-induced angiogenic endothelial cell activation. Required for centrosome positioning and centrosome-dependent exit from mitosis. Plays a role in terminal erythroid differentiation. Inhibits podocyte motility via regulation of actin cytoskeletal dynamics and phosphorylation of CFL1. Promotes keratinocyte terminal differentiation. Involved in osteoblast compaction through the fibronectin fibrillogenesis cell-mediated matrix assembly process, essential for osteoblast mineralization. May regulate closure of the eyelids and ventral body wall by inducing the assembly of actomyosin bundles. This chain is Rho-associated protein kinase 1 (ROCK1), found in Homo sapiens (Human).